We begin with the raw amino-acid sequence, 241 residues long: Deoxynucleotide monophosphate kinase (241 aa).

K10 serves as a coordination point for dGMP. R11, G13, D15, and T16 together coordinate ATP. DGMP is bound by residues I36 and K37. Residue Y42 coordinates Mg(2+). R68 contacts dGMP. Residues Q85 and E108 each coordinate Mg(2+). R132, G139, T140, V144, W152, D175, R177, Q178, E181, and T208 together coordinate dGMP.

Belongs to the dNMP kinase family. Homodimer. Mg(2+) is required as a cofactor.

It carries out the reaction dTMP + ATP = dTDP + ADP. It catalyses the reaction dGMP + ATP = dGDP + ADP. The enzyme catalyses 5-hydroxymethyl-dCMP + ATP = 5-hydroxymethyl-dCDP + ADP. Its activity is regulated as follows. Inhibited by pyridoxal 5'-phosphate and diethylpyrocarbonate. Functionally, allows the synthesis of deoxyribonucleoside triphosphates necessary for the rapid viral DNA replication. Phosphorylates dGMP, dTMP and 5-hydroxymethyl-dCMP (hmdCMP) while excluding dCMP and dAMP. The phosphorylation of 5-hydroxymethyl-dCMP represents the first step in the replacement of cytosine by hydroxymethylcytosine in new viral DNA genomes. This is Deoxynucleotide monophosphate kinase (1) from Enterobacteria phage T4 (Bacteriophage T4).